Reading from the N-terminus, the 1454-residue chain is Alpha-2-macroglobulin-like protein 1 (1454 aa).

The signal sequence occupies residues 1-17 (MWAQLLLGMLALSPAIA). Cysteines 40 and 78 form a disulfide. An N-linked (GlcNAc...) asparagine glycan is attached at asparagine 120. 2 cysteine pairs are disulfide-bonded: cysteine 241–cysteine 291 and cysteine 259–cysteine 279. N-linked (GlcNAc...) asparagine glycans are attached at residues asparagine 281 and asparagine 409. Intrachain disulfides connect cysteine 464/cysteine 557, cysteine 589/cysteine 769, cysteine 819/cysteine 847, cysteine 845/cysteine 881, cysteine 919/cysteine 1307, cysteine 1075/cysteine 1123, and cysteine 1338/cysteine 1453. A bait region region spans residues 695–726 (SHRSPEYSTAMGAGGGHPEAFESSTPLHQAED). Residue asparagine 857 is glycosylated (N-linked (GlcNAc...) asparagine). The isoglutamyl cysteine thioester (Cys-Gln) cross-link spans 970–973 (CGEQ). A glycan (N-linked (GlcNAc...) asparagine) is linked at asparagine 1020.

This sequence belongs to the protease inhibitor I39 (alpha-2-macroglobulin) family. In terms of assembly, monomer. As to expression, in the epidermis, expressed predominantly in the granular layer at the apical edge of keratinocytes (at protein level). Also detected in placenta, testis and thymus but not in epithelia of kidney, lung, small intestine or colon.

It localises to the secreted. Is able to inhibit all four classes of proteinases by a unique 'trapping' mechanism. This protein has a peptide stretch, called the 'bait region' which contains specific cleavage sites for different proteinases. When a proteinase cleaves the bait region, a conformational change is induced in the protein which traps the proteinase. The entrapped enzyme remains active against low molecular weight substrates (activity against high molecular weight substrates is greatly reduced). Following cleavage in the bait region a thioester bond is hydrolyzed and mediates the covalent binding of the protein to the proteinase. Displays inhibitory activity against chymotrypsin, papain, thermolysin, subtilisin A and, to a lesser extent, elastase but not trypsin. May play an important role during desquamation by inhibiting extracellular proteases. The polypeptide is Alpha-2-macroglobulin-like protein 1 (Homo sapiens (Human)).